Here is a 570-residue protein sequence, read N- to C-terminus: Sulfite reductase [NADPH] hemoprotein beta-component (570 aa).

The [4Fe-4S] cluster site is built by Cys434, Cys440, Cys479, and Cys483. A siroheme-binding site is contributed by Cys483.

It belongs to the nitrite and sulfite reductase 4Fe-4S domain family. Alpha(8)-beta(8). The alpha component is a flavoprotein, the beta component is a hemoprotein. Siroheme is required as a cofactor. It depends on [4Fe-4S] cluster as a cofactor.

The catalysed reaction is hydrogen sulfide + 3 NADP(+) + 3 H2O = sulfite + 3 NADPH + 4 H(+). The protein operates within sulfur metabolism; hydrogen sulfide biosynthesis; hydrogen sulfide from sulfite (NADPH route): step 1/1. Functionally, component of the sulfite reductase complex that catalyzes the 6-electron reduction of sulfite to sulfide. This is one of several activities required for the biosynthesis of L-cysteine from sulfate. This is Sulfite reductase [NADPH] hemoprotein beta-component (cysI) from Salmonella typhimurium (strain LT2 / SGSC1412 / ATCC 700720).